The following is a 145-amino-acid chain: Superoxide dismutase [Mn/Fe] (145 aa).

Residues His-10 and His-64 each contribute to the Fe(3+) site. The Mn(2+) site is built by His-10 and His-64.

It belongs to the iron/manganese superoxide dismutase family. Mn(2+) serves as cofactor. Requires Fe(3+) as cofactor.

The enzyme catalyses 2 superoxide + 2 H(+) = H2O2 + O2. Destroys superoxide anion radicals which are normally produced within the cells and which are toxic to biological systems. Catalyzes the dismutation of superoxide anion radicals into O2 and H2O2 by successive reduction and oxidation of the transition metal ion at the active site. In Streptococcus canis, this protein is Superoxide dismutase [Mn/Fe] (sodA).